The primary structure comprises 985 residues: Na(+)/H(+) antiporter (985 aa).

At Met1–Ala12 the chain is on the cytoplasmic side. A helical membrane pass occupies residues His13–Val33. At Lys34–Lys36 the chain is on the extracellular side. A helical membrane pass occupies residues Leu37 to Leu57. Over Asn58–Ser70 the chain is Cytoplasmic. A helical membrane pass occupies residues Ile71–Leu91. Topologically, residues Pro92–Met105 are extracellular. The chain crosses the membrane as a helical span at residues Leu106 to Ile126. Residues Pro127–Gly128 lie on the Cytoplasmic side of the membrane. The chain crosses the membrane as a helical span at residues Leu129 to Ala149. The Extracellular segment spans residues Gln150–Asn176. The chain crosses the membrane as a helical span at residues Asp177–Gly197. The Cytoplasmic portion of the chain corresponds to Arg198–Asp203. Residues Trp204 to Gly224 form a helical membrane-spanning segment. Over Tyr225–Ser244 the chain is Extracellular. A helical transmembrane segment spans residues Phe245–Val265. Topologically, residues Asp266–Ser294 are cytoplasmic. The helical transmembrane segment at Thr295 to Trp315 threads the bilayer. The Extracellular segment spans residues Ser316 to Asn319. A helical transmembrane segment spans residues Asn320–Leu340. The Cytoplasmic portion of the chain corresponds to Arg341–Glu361. A helical transmembrane segment spans residues Ala362–Ala382. The Extracellular segment spans residues Arg383–Gln410. Residues Leu411–Gly431 form a helical membrane-spanning segment. Residues Ser432–Lys985 are Cytoplasmic-facing. 2 disordered regions span residues Met489 to Thr701 and Asp726 to Leu760. The span at Asn517–Thr526 shows a compositional bias: polar residues. Residues Pro538–Asn558 are compositionally biased toward basic residues. Composition is skewed to basic and acidic residues over residues Lys559–Met572 and Asp580–Arg593. Residue Ser568 is modified to Phosphoserine. Residues Ser637 to Ser646 are compositionally biased toward low complexity. A compositionally biased stretch (acidic residues) spans Glu661–Asn675. Over residues Glu676–Lys698 the composition is skewed to basic and acidic residues. Positions Ser743–Ser756 are enriched in low complexity. At Thr765 the chain carries Phosphothreonine. Phosphoserine is present on residues Ser768 and Ser774. Residues Ile812–Lys985 are disordered. Basic and acidic residues-rich tracts occupy residues His815–Asn828 and Asp854–Ser863. Acidic residues predominate over residues Leu887–Thr920. The span at Ser970–Lys979 shows a compositional bias: low complexity.

It belongs to the fungal Na(+)/H(+) exchanger family.

Its subcellular location is the cell membrane. In terms of biological role, sodium export from cell, takes up external protons in exchange for internal sodium ions. Also capable of exporting potassium ions. This Saccharomyces cerevisiae (strain ATCC 204508 / S288c) (Baker's yeast) protein is Na(+)/H(+) antiporter (NHA1).